The following is a 599-amino-acid chain: Sulfite reductase [NADPH] flavoprotein alpha-component (599 aa).

Positions 64–202 constitute a Flavodoxin-like domain; sequence VTLISASQTG…AASEWRACVV (139 aa). Residues 70-75, 117-120, and 153-162 contribute to the FMN site; these read SQTGNA, STQG, and LGDTSYEFFC. The region spanning 234 to 448 is the FAD-binding FR-type domain; the sequence is DAPLTATLSV…IEHNDNFRLP (215 aa). FAD contacts are provided by residues threonine 322, alanine 356, 386–389, 404–406, tyrosine 410, and 419–422; these read RLYS, TVG, and GGAS. NADP(+)-binding positions include 519–520, 525–529, and aspartate 561; these read SR and KIYVQ. Tyrosine 599 is an FAD binding site.

The protein belongs to the NADPH-dependent sulphite reductase flavoprotein subunit CysJ family. This sequence in the N-terminal section; belongs to the flavodoxin family. It in the C-terminal section; belongs to the flavoprotein pyridine nucleotide cytochrome reductase family. As to quaternary structure, alpha(8)-beta(8). The alpha component is a flavoprotein, the beta component is a hemoprotein. The cofactor is FAD. Requires FMN as cofactor.

It carries out the reaction hydrogen sulfide + 3 NADP(+) + 3 H2O = sulfite + 3 NADPH + 4 H(+). It functions in the pathway sulfur metabolism; hydrogen sulfide biosynthesis; hydrogen sulfide from sulfite (NADPH route): step 1/1. Its function is as follows. Component of the sulfite reductase complex that catalyzes the 6-electron reduction of sulfite to sulfide. This is one of several activities required for the biosynthesis of L-cysteine from sulfate. The flavoprotein component catalyzes the electron flow from NADPH -&gt; FAD -&gt; FMN to the hemoprotein component. This chain is Sulfite reductase [NADPH] flavoprotein alpha-component, found in Salmonella typhi.